The chain runs to 373 residues: Peptide chain release factor 1-like, mitochondrial (373 aa).

The N-terminal 13 residues, 1 to 13 (MRSGFLRSARRLW), are a transit peptide targeting the mitochondrion. Residues 56 to 111 (QLAAAARLLNEKERELRDTESLLHDENEDLKKLAESEIALCQKEIAELKHRIISLL) are a coiled coil. The segment at 229-293 (PKDLRIDTKR…LRARLYSMRL (65 aa)) is GGQ domain. Positions 243 to 245 (GGQ) match the GGQ motif. The residue at position 245 (glutamine 245) is an N5-methylglutamine.

It belongs to the prokaryotic/mitochondrial release factor family. In terms of processing, methylation of glutamine in the GGQ triplet by HEMK1 is conserved from bacteria to mammals.

Its subcellular location is the mitochondrion. Functionally, mitochondrial peptide chain release factor that directs the termination of translation in response to the peptide chain termination codons UAA and UAG. The chain is Peptide chain release factor 1-like, mitochondrial (Mtrf1l) from Rattus norvegicus (Rat).